Reading from the N-terminus, the 662-residue chain is UvrABC system protein B (662 aa).

Residues 25–414 enclose the Helicase ATP-binding domain; it reads AGLNSKKRSQ…GTVVELIIRP (390 aa). An ATP-binding site is contributed by 38–45; that stretch reads GITGSGKT. The Beta-hairpin motif lies at 91 to 114; that stretch reads YYDYYQPEAYIVRTDTFIEKDSSI. The region spanning 430-592 is the Helicase C-terminal domain; that stretch reads QVEDLISEIQ…IIPKTINSAI (163 aa). A UVR domain is found at 622 to 657; sequence KSYMDKLKKEMFKAASNLEFEQAAKLRNQLKTLEKA.

The protein belongs to the UvrB family. Forms a heterotetramer with UvrA during the search for lesions. Interacts with UvrC in an incision complex.

The protein resides in the cytoplasm. In terms of biological role, the UvrABC repair system catalyzes the recognition and processing of DNA lesions. A damage recognition complex composed of 2 UvrA and 2 UvrB subunits scans DNA for abnormalities. Upon binding of the UvrA(2)B(2) complex to a putative damaged site, the DNA wraps around one UvrB monomer. DNA wrap is dependent on ATP binding by UvrB and probably causes local melting of the DNA helix, facilitating insertion of UvrB beta-hairpin between the DNA strands. Then UvrB probes one DNA strand for the presence of a lesion. If a lesion is found the UvrA subunits dissociate and the UvrB-DNA preincision complex is formed. This complex is subsequently bound by UvrC and the second UvrB is released. If no lesion is found, the DNA wraps around the other UvrB subunit that will check the other stand for damage. The sequence is that of UvrABC system protein B from Rickettsia typhi (strain ATCC VR-144 / Wilmington).